Reading from the N-terminus, the 247-residue chain is AA9 family lytic polysaccharide monooxygenase A (247 aa).

Positions 1–19 (MVRLASLAVLGSVIATASA) are cleaved as a signal peptide. Histidine 20 and histidine 100 together coordinate Cu(2+). A disulfide bridge connects residues cysteine 60 and cysteine 185. Residue histidine 165 coordinates O2. Tyrosine 182 contacts Cu(2+). A glycan (N-linked (GlcNAc...) asparagine) is linked at asparagine 193.

Belongs to the polysaccharide monooxygenase AA9 family. Cu(2+) serves as cofactor.

It localises to the secreted. The catalysed reaction is [(1-&gt;4)-beta-D-glucosyl]n+m + reduced acceptor + O2 = 4-dehydro-beta-D-glucosyl-[(1-&gt;4)-beta-D-glucosyl]n-1 + [(1-&gt;4)-beta-D-glucosyl]m + acceptor + H2O.. Lytic polysaccharide monooxygenase (LPMO) that depolymerizes polysaccharides via the oxidation of scissile alpha- or beta-(1-4)-glycosidic bonds, yielding C4 oxidation products. Catalysis by LPMOs requires the reduction of the active-site copper from Cu(II) to Cu(I) by a reducing agent and H(2)O(2) or O(2) as a cosubstrate. Shows C4-oxidative cleavage of amorphous cellulose and soluble cello-oligosaccharides. Also active on xyloglucan, mixed-linkage beta-glucan, and glucomannan. Not active on crystalline forms of cellulose. Has higher affinity for linear substrates compared to branched substrates. Catalyzes a fast and specific peroxygenase reaction that is at least two orders of magnitude faster than the apparent monooxygenase reaction. The protein is AA9 family lytic polysaccharide monooxygenase A of Schizophyllum commune (strain H4-8 / FGSC 9210) (Split gill fungus).